Reading from the N-terminus, the 137-residue chain is Phosphoribosyl-AMP cyclohydrolase (137 aa).

Aspartate 84 provides a ligand contact to Mg(2+). Cysteine 85 contacts Zn(2+). Residues aspartate 86 and aspartate 88 each coordinate Mg(2+). Zn(2+) contacts are provided by cysteine 101 and cysteine 108.

This sequence belongs to the PRA-CH family. In terms of assembly, homodimer. Requires Mg(2+) as cofactor. It depends on Zn(2+) as a cofactor.

The protein resides in the cytoplasm. It catalyses the reaction 1-(5-phospho-beta-D-ribosyl)-5'-AMP + H2O = 1-(5-phospho-beta-D-ribosyl)-5-[(5-phospho-beta-D-ribosylamino)methylideneamino]imidazole-4-carboxamide. It functions in the pathway amino-acid biosynthesis; L-histidine biosynthesis; L-histidine from 5-phospho-alpha-D-ribose 1-diphosphate: step 3/9. In terms of biological role, catalyzes the hydrolysis of the adenine ring of phosphoribosyl-AMP. The polypeptide is Phosphoribosyl-AMP cyclohydrolase (Chlorobaculum tepidum (strain ATCC 49652 / DSM 12025 / NBRC 103806 / TLS) (Chlorobium tepidum)).